Here is a 1425-residue protein sequence, read N- to C-terminus: Nephrocystin-4 (1425 aa).

At S145 the chain carries Phosphoserine. The tract at residues 448 to 554 (FSLSSDGPTE…VSHLEADLSQ (107 aa)) is disordered. Low complexity-rich tracts occupy residues 473–484 (PASPSGTPAPAA) and 507–530 (SPLS…SQSP). The sufficient for basal bodies localization stretch occupies residues 822–1425 (LTLANVGHAC…ETFCVKVLYQ (604 aa)).

It belongs to the NPHP4 family. In terms of assembly, interacts with NPHP1 and RPGRIP1L/NPHP8; NPHP1, NPHP4 and RPGRIP1L are proposed to form a functional NPHP1-4-8 module localized to cell-cell contacts and the ciliary transition zone; NPHP4 mediates the interaction between NPHP1 and RPGRIP1L. Interacts with IQCB1/NPHP5; the interaction likely requires additional interactors. Interacts with RPGRIP1, CEP164, JADE1, PALS1, INADL, PARD6A, INVS, DVL2. Interacts with INTU; INTU mediates the interaction between NPHP4 and DAAM1. Interacts with JADE1. Interacts with SPATA7. As to expression, expressed in the retina (at protein level).

It is found in the cytoplasm. The protein localises to the cytoskeleton. Its subcellular location is the cilium basal body. The protein resides in the microtubule organizing center. It localises to the centrosome. It is found in the cell junction. The protein localises to the tight junction. Involved in the organization of apical junctions; the function is proposed to implicate a NPHP1-4-8 module. Does not seem to be strictly required for ciliogenesis. Required for building functional cilia. Involved in the organization of the subapical actin network in multiciliated epithelial cells. Seems to recruit INT to basal bodies of motile cilia which subsequently interacts with actin-modifying proteins such as DAAM1. In cooperation with INVS may down-regulate the canonical Wnt pathway and promote the Wnt-PCP pathway by regulating expression and subcellular location of disheveled proteins. Stabilizes protein levels of JADE1 and promotes its translocation to the nucleus leading to cooperative inhibition of canonical Wnt signaling. Acts as negative regulator of the hippo pathway by association with LATS1 and modifying LATS1-dependent phosphorylation and localization of WWTR1/TAZ. This Mus musculus (Mouse) protein is Nephrocystin-4 (Nphp4).